We begin with the raw amino-acid sequence, 404 residues long: Deoxyguanosinetriphosphate triphosphohydrolase-like protein (404 aa).

One can recognise an HD domain in the interval Arg69–Asp217.

Belongs to the dGTPase family. Type 2 subfamily.

The chain is Deoxyguanosinetriphosphate triphosphohydrolase-like protein from Rhodopseudomonas palustris (strain BisB18).